The primary structure comprises 255 residues: uncharacterized protein (255 aa).

The protein belongs to the methyltransferase superfamily.

This is an uncharacterized protein from Mycolicibacterium vanbaalenii (strain DSM 7251 / JCM 13017 / BCRC 16820 / KCTC 9966 / NRRL B-24157 / PYR-1) (Mycobacterium vanbaalenii).